We begin with the raw amino-acid sequence, 128 residues long: Transcription antitermination protein NusB (128 aa).

Belongs to the NusB family.

Functionally, involved in transcription antitermination. Required for transcription of ribosomal RNA (rRNA) genes. Binds specifically to the boxA antiterminator sequence of the ribosomal RNA (rrn) operons. The polypeptide is Transcription antitermination protein NusB (Listeria monocytogenes serotype 4a (strain HCC23)).